A 505-amino-acid polypeptide reads, in one-letter code: Maturase K (505 aa).

It belongs to the intron maturase 2 family. MatK subfamily.

The protein resides in the plastid. The protein localises to the chloroplast. In terms of biological role, usually encoded in the trnK tRNA gene intron. Probably assists in splicing its own and other chloroplast group II introns. The polypeptide is Maturase K (Gomphrena haageana (Haage's globe-amaranth)).